A 62-amino-acid chain; its full sequence is Toxin Tb2 (62 aa).

In terms of domain architecture, LCN-type CS-alpha/beta spans 1–62; the sequence is KEGYAMDHEG…KVWDYATNKC (62 aa). 4 cysteine pairs are disulfide-bonded: cysteine 11–cysteine 62, cysteine 15–cysteine 38, cysteine 23–cysteine 43, and cysteine 27–cysteine 45. Cysteine 62 carries the post-translational modification Cysteine amide.

The protein belongs to the long (4 C-C) scorpion toxin superfamily. Sodium channel inhibitor family. Beta subfamily. In terms of tissue distribution, expressed by the venom gland.

The protein localises to the secreted. Its function is as follows. Beta toxins bind voltage-independently at site-4 of sodium channels (Nav) and shift the voltage of activation toward more negative potentials thereby affecting sodium channel activation and promoting spontaneous and repetitive firing. This toxin is active on mammals. This chain is Toxin Tb2, found in Tityus bahiensis (Brazilian scorpion).